A 976-amino-acid polypeptide reads, in one-letter code: Dibasic-processing endoprotease (976 aa).

Positions 1–17 (MLRKFILGLLLASQAVA) are cleaved as a signal peptide. Asn-156 carries an N-linked (GlcNAc...) asparagine glycan. Residues 172–212 (AEEAQKAQDDKGDKKEDQKDDKKEGQEAQKEGDKEDNKGDD) are compositionally biased toward basic and acidic residues. The interval 172–246 (AEEAQKAQDD…VQWKPVDESM (75 aa)) is disordered. Positions 213-231 (KEDGEEDDDDDEDEDDDDA) are enriched in acidic residues. The Peptidase S8 domain maps to 277-595 (QWYLHNVHKA…YGKLDASKIV (319 aa)). Asn-291 and Asn-299 each carry an N-linked (GlcNAc...) asparagine glycan. The Charge relay system role is filled by Asp-311. Asn-336 carries N-linked (GlcNAc...) asparagine glycosylation. Catalysis depends on charge relay system residues His-349 and Ser-528. The helical transmembrane segment at 524-544 (HGGTSAAAPLAAGVFALALSV) threads the bilayer. Residues 604–737 (VNNQTSFHSE…QLNVFGEQKD (134 aa)) enclose the P/Homo B domain. N-linked (GlcNAc...) asparagine glycosylation occurs at Asn-606. Positions 733–848 (GEQKDKREEN…SDSHTSWWPD (116 aa)) are disordered. Basic and acidic residues predominate over residues 734 to 830 (EQKDKREENK…EEKPEEKPVD (97 aa)). The chain crosses the membrane as a helical span at residues 855 to 875 (AWLYGAVLLVGGFIAVIGIYA). N-linked (GlcNAc...) asparagine glycosylation is present at Asn-886. A disordered region spans residues 914–976 (PEDTHRRSGD…RDNDRQNLLG (63 aa)). Basic and acidic residues-rich tracts occupy residues 915-928 (EDTHRRSGDNDRLY) and 940-976 (MFRISDEGEDAHDVEPELNRVSMEADKRDNDRQNLLG).

The protein belongs to the peptidase S8 family. Furin subfamily.

The protein localises to the membrane. The sequence is that of Dibasic-processing endoprotease (XPR6) from Yarrowia lipolytica (strain CLIB 122 / E 150) (Yeast).